We begin with the raw amino-acid sequence, 294 residues long: Equatorin (294 aa).

An N-terminal signal peptide occupies residues 1-14 (MNFILFIFIPGVFS). At 15 to 181 (LKSSTLKPTI…QPDLEDLKIK (167 aa)) the chain is on the vesicular side. N-linked (GlcNAc...) asparagine glycosylation occurs at N76. Residues 107–126 (KSTIEEETTTSEPSHKNIQR) form a disordered region. N143 carries N-linked (GlcNAc...) asparagine glycosylation. Residues 182–202 (IMLGISLMTLLLFVVLLAFCS) form a helical membrane-spanning segment. Residues 203–294 (ATLYKLRHLS…MHENDESVTR (92 aa)) are Cytoplasmic-facing.

Interacts with SNAP25. Post-translationally, highly N- and O-glycosylated; contains sialic acid. Isoform 1 is highly expressed in testis. Isoform 2 is expressed at low levels in skin and blood.

Its subcellular location is the cytoplasmic vesicle. It localises to the secretory vesicle. The protein resides in the acrosome membrane. The protein localises to the acrosome inner membrane. It is found in the acrosome outer membrane. In terms of biological role, acrosomal membrane-anchored protein involved in the process of fertilization and in acrosome biogenesis. In Homo sapiens (Human), this protein is Equatorin (EQTN).